We begin with the raw amino-acid sequence, 527 residues long: Bromodomain-containing protein 9 (527 aa).

Residues 1–16 (MNVSVTKRRKKKKKKK) are compositionally biased toward basic residues. The tract at residues 1-54 (MNVSVTKRRKKKKKKKSEKEKDKYLDEDERRRRKEEKKRKREKEQCDSEGETEV) is disordered. A compositionally biased stretch (basic and acidic residues) spans 17–30 (SEKEKDKYLDEDER). The segment covering 31–41 (RRRKEEKKRKR) has biased composition (basic residues). In terms of domain architecture, Bromo spans 78-182 (NESTPLQQLL…HTGFKMMSKA (105 aa)). Residues 156–158 (TYN) are histone H4K5ac H4K8ac and histone H4K5bu H4K8bu binding. The span at 468 to 478 (DFHDVHNDRGG) shows a compositional bias: basic and acidic residues. Positions 468–527 (DFHDVHNDRGGSRPSSSSSMSNNSERDHHLGSPSRISVGEQQDIHDPYEFLQSPETDNQN) are disordered. Low complexity predominate over residues 479–490 (SRPSSSSSMSNN).

In terms of assembly, binds acetylated histones H3 and H4. Binds butyrylated histone H4.

Its subcellular location is the nucleus. Its function is as follows. Plays a role in chromatin remodeling and regulation of transcription. Acts as a chromatin reader that recognizes and binds acylated histones: binds histones that are acetylated and/or butyrylated. In Xenopus laevis (African clawed frog), this protein is Bromodomain-containing protein 9 (brd9).